An 85-amino-acid polypeptide reads, in one-letter code: Progonadoliberin-2 (85 aa).

The signal sequence occupies residues 1–23 (MCVSRLVLLFGLLLCVGAQLSNA). Glutamine 24 carries the pyrrolidone carboxylic acid modification. At glycine 33 the chain carries Glycine amide.

The protein belongs to the GnRH family.

It is found in the secreted. In terms of biological role, stimulates the secretion of gonadotropins. This chain is Progonadoliberin-2 (gnrh2), found in Dicentrarchus labrax (European seabass).